Reading from the N-terminus, the 295-residue chain is MAVLAPLIALVYSVPRLSRWLARPYCLLSALLSIAFLLVRKLPPICNGLPTQREDGNPCDFDWREVEILMFLSAIVMMKNRRSITVEQHVGNIFMFSKVANAILFFRLDIRMGLLYLTLCIVFLMTCKPPLYMGPEYIKYFNDKTIDEELERDKRVTWIVEFFANWSNDCQSFAPIYADLSLKYNCSGLNFGKVDVGRYTDVSTRYKVSTSPLTRQLPTLILFQGGKEVIRRPQIDKKGRAVSWTFSEENVIREFNLNELYQRAKKHSKGGDMSEEKPVDPAPTTVPDGENKKDK.

The first 48 residues, 1–48 (MAVLAPLIALVYSVPRLSRWLARPYCLLSALLSIAFLLVRKLPPICNG), serve as a signal peptide directing secretion. Topologically, residues 49–102 (LPTQREDGNPCDFDWREVEILMFLSAIVMMKNRRSITVEQHVGNIFMFSKVANA) are extracellular. The helical transmembrane segment at 103 to 125 (ILFFRLDIRMGLLYLTLCIVFLM) threads the bilayer. One can recognise a Thioredoxin domain in the interval 114-269 (LLYLTLCIVF…LYQRAKKHSK (156 aa)). Over 126-295 (TCKPPLYMGP…VPDGENKKDK (170 aa)) the chain is Cytoplasmic. Phosphoserine occurs at positions 211 and 243. The tract at residues 266–295 (KHSKGGDMSEEKPVDPAPTTVPDGENKKDK) is disordered. The span at 269–279 (KGGDMSEEKPV) shows a compositional bias: basic and acidic residues. Residues 292–295 (KKDK) carry the Di-lysine motif motif.

In terms of assembly, monomer. Homodimer; disulfide-linked. Occurs in both reduced and oxidized monomeric form. Oxidative conditions increase homodimerization. Interacts with CANX. Interacts with ATP2A2.

It localises to the endoplasmic reticulum membrane. Its subcellular location is the mitochondrion membrane. Functionally, endoplasmic reticulum and mitochondria-associated protein that probably functions as a regulator of cellular redox state and thereby regulates protein post-translational modification, protein folding and mitochondrial activity. Indirectly regulates neuronal proliferation, migration, and organization in the developing brain. This chain is Thioredoxin-related transmembrane protein 2 (Tmx2), found in Mus musculus (Mouse).